The chain runs to 197 residues: Rac-like GTP-binding protein ARAC11 (197 aa).

Gly13–Thr20 lines the GTP pocket. An Effector region motif is present at residues Tyr35–Phe43. GTP-binding positions include Asp60 to Gln64 and Thr118 to Asp121. Residue Cys194 is modified to Cysteine methyl ester. Residue Cys194 is the site of S-geranylgeranyl cysteine attachment. Positions Ser195–Leu197 are cleaved as a propeptide — removed in mature form.

Belongs to the small GTPase superfamily. Rho family. Part of a complex containing ROPGEF1 and PRK2. Interacts with UGT1, ICR1, ICR2, ICR3, ICR4 and ICR5. Interacts with PHIP1 when activated by GTP. As to expression, exclusively expressed in mature pollen and pollen tubes.

It is found in the cytoplasm. Its subcellular location is the membrane. It carries out the reaction GTP + H2O = GDP + phosphate + H(+). Its function is as follows. May be involved in cell polarity control during the actin-dependent tip growth of pollen tubes. May regulate callose synthase 1 (CALS1) activity through the interaction with UGT1. Functionally, inactive GDP-bound Rho GTPases reside in the cytosol, are found in a complex with Rho GDP-dissociation inhibitors (Rho GDIs), and are released from the GDI protein in order to translocate to membranes upon activation. The protein is Rac-like GTP-binding protein ARAC11 of Arabidopsis thaliana (Mouse-ear cress).